A 104-amino-acid polypeptide reads, in one-letter code: uncharacterized protein (104 aa).

This is an uncharacterized protein from Galliformes (FAdV-1).